The following is a 1117-amino-acid chain: Mitochondrial protein cyt-4 (1117 aa).

The region spanning 561-916 is the RNB domain; it reads RQDFYTSTVY…LVHWQIQAAL (356 aa). The disordered stretch occupies residues 705 to 730; the sequence is VVLEVGTPPSAEDEAPTRKMTKPDEL. Positions 719–730 are enriched in basic and acidic residues; it reads APTRKMTKPDEL.

It belongs to the RNR ribonuclease family. In terms of assembly, homodimer.

Its subcellular location is the mitochondrion. Functionally, required for RNA 5'- and 3'-end processing and splicing. May act on the RNA processing enzymes directly, or it may act on other regulatory molecules, which influence the activity or synthesis of these enzymes. In Neurospora crassa (strain ATCC 24698 / 74-OR23-1A / CBS 708.71 / DSM 1257 / FGSC 987), this protein is Mitochondrial protein cyt-4 (cyt-4).